Here is a 207-residue protein sequence, read N- to C-terminus: KSRLYFAVTVLMCAFVSINGVGLNDLLERASQLSDKLHSLSTSLTNDLDSHFPPVGRVMMPRPSMCHTSSLQIPNDKDQALKVPEDELLSLARSLLLAWSDPLALLSSKASSLAHPERNTINSKTKELQDNINSLVPGLEHVVHKMGSSSDNLSSLPFYSNSLGQDKTSRLVNFHFLLSCFRRDSHKIDSFLKVLRCRAAKKRPEMC.

The signal sequence occupies residues 1 to 20 (KSRLYFAVTVLMCAFVSING). Intrachain disulfides connect C66–C180 and C197–C207.

This sequence belongs to the somatotropin/prolactin family. Pituitary gland.

The protein resides in the secreted. The protein is Prolactin (prl) of Hypophthalmichthys molitrix (Silver carp).